We begin with the raw amino-acid sequence, 320 residues long: Mitochondrial glutamate carrier 2 (320 aa).

3 Solcar repeats span residues 11 to 97, 105 to 215, and 224 to 313; these read LSIS…LRQL, RNLK…LNQL, and ASFT…GIGE. 3 consecutive transmembrane segments (helical) span residues 17–37, 66–86, and 110–128; these read LING…IDLA, FLGM…EKAI, and EMLA…TCPM. S150 is subject to Phosphoserine. Transmembrane regions (helical) follow at residues 190–210, 230–250, and 293–313; these read GLGA…PLFA, FVAG…LDVL, and ALVI…GIGE.

Belongs to the mitochondrial carrier (TC 2.A.29) family.

It localises to the mitochondrion inner membrane. It catalyses the reaction L-glutamate(in) + H(+)(in) = L-glutamate(out) + H(+)(out). Responsible for the transport of glutamate from the cytosol into the mitochondrial matrix with the concomitant import of a proton (symport system). This is Mitochondrial glutamate carrier 2 (Slc25a18) from Mus musculus (Mouse).